Reading from the N-terminus, the 291-residue chain is NAD kinase (291 aa).

The active-site Proton acceptor is the Asp-73. NAD(+) contacts are provided by residues 73–74 (DG), 147–148 (ND), Arg-175, Asp-177, 188–193 (TAYALS), Ala-212, and Gln-246.

The protein belongs to the NAD kinase family. Requires a divalent metal cation as cofactor.

It localises to the cytoplasm. The enzyme catalyses NAD(+) + ATP = ADP + NADP(+) + H(+). In terms of biological role, involved in the regulation of the intracellular balance of NAD and NADP, and is a key enzyme in the biosynthesis of NADP. Catalyzes specifically the phosphorylation on 2'-hydroxyl of the adenosine moiety of NAD to yield NADP. In Polaromonas naphthalenivorans (strain CJ2), this protein is NAD kinase.